The chain runs to 161 residues: Ribosome maturation factor RimP (161 aa).

This sequence belongs to the RimP family.

The protein localises to the cytoplasm. Required for maturation of 30S ribosomal subunits. This is Ribosome maturation factor RimP from Myxococcus xanthus (strain DK1622).